We begin with the raw amino-acid sequence, 429 residues long: MKFTESERLQQLSNEYILGGVNSPSRSYKAVGGGAPVVMREGHGAYLYDVDGNKFIDYLQAYGPIITGHAHPHITKAIQDQAAKGVLYGTPTELEIEFSKKLREAIPSLEKIRFVNSGTEAVMTTIRVARAYTKRNKIIKFAGSYHGHSDLVLVAAGSGPSQLGSPDSAGVPESVAKEVITVPFNDIESYKEAMKHWGDEVAAVLVEPIVGNFGMVEPQPGFLEKVNEITHDYGALVIYDEVITAFRFHYGAAQDLLNVYPDLTAFGKIIGGGLPIGGYGGRQDIMEHVAPLGPAYQAGTMAGNPLSMRAGIALLEVLEQNGVYERLDQLGKRLEDGLLELIDKHNITATINRVYGSLTLYFTDEKITHYEQVENSNGEAFAKFFKLMLNQGINLAPSKFEAWFLTTEHTEEDIDETLKAVDYAFSQMK.

At lysine 268 the chain carries N6-(pyridoxal phosphate)lysine.

It belongs to the class-III pyridoxal-phosphate-dependent aminotransferase family. HemL subfamily. In terms of assembly, homodimer. The cofactor is pyridoxal 5'-phosphate.

Its subcellular location is the cytoplasm. The enzyme catalyses (S)-4-amino-5-oxopentanoate = 5-aminolevulinate. Its pathway is porphyrin-containing compound metabolism; protoporphyrin-IX biosynthesis; 5-aminolevulinate from L-glutamyl-tRNA(Glu): step 2/2. The protein is Glutamate-1-semialdehyde 2,1-aminomutase 1 of Staphylococcus haemolyticus (strain JCSC1435).